We begin with the raw amino-acid sequence, 299 residues long: NAD-dependent protein deacetylase 1 (299 aa).

The region spanning 15-292 (LPPGTTDLAP…TTVADRLGLR (278 aa)) is the Deacetylase sirtuin-type domain. NAD(+)-binding positions include 39–59 (GAGISTESGIPDYRGEGGSLS) and 117–120 (QNVD). The active-site Proton acceptor is H135. Residues C143, C146, C194, and C197 each coordinate Zn(2+). NAD(+)-binding positions include 234 to 236 (GSS) and L278.

It belongs to the sirtuin family. Class II subfamily. Zn(2+) is required as a cofactor.

The protein localises to the cytoplasm. The catalysed reaction is N(6)-acetyl-L-lysyl-[protein] + NAD(+) + H2O = 2''-O-acetyl-ADP-D-ribose + nicotinamide + L-lysyl-[protein]. In terms of biological role, NAD-dependent protein deacetylase which modulates the activities of several enzymes which are inactive in their acetylated form. The chain is NAD-dependent protein deacetylase 1 from Streptomyces coelicolor (strain ATCC BAA-471 / A3(2) / M145).